The following is a 262-amino-acid chain: UPF0758 protein BTH_I0781 (262 aa).

The interval 1-45 is disordered; sequence MQYEIVSAGENVGDEPERERPVAQAAAAPGIPRPAALPAAGAARR. The segment covering 22–43 has biased composition (low complexity); the sequence is VAQAAAAPGIPRPAALPAAGAA. In terms of domain architecture, MPN spans 140 to 262; the sequence is LVDSPGAVDD…TFSFAQAGWI (123 aa). His211, His213, and Asp224 together coordinate Zn(2+). The short motif at 211-224 is the JAMM motif element; that stretch reads HNHPSGAVRPSAAD.

It belongs to the UPF0758 family.

The chain is UPF0758 protein BTH_I0781 from Burkholderia thailandensis (strain ATCC 700388 / DSM 13276 / CCUG 48851 / CIP 106301 / E264).